A 357-amino-acid polypeptide reads, in one-letter code: Glucose-6-phosphatase catalytic subunit 1 (357 aa).

At M1–D28 the chain is on the lumenal side. The chain crosses the membrane as a helical span at residues W29–I49. Over W50–K60 the chain is Cytoplasmic. Residues L61–G81 form a helical membrane-spanning segment. At Q82–S117 the chain is on the lumenal side. R83 serves as a coordination point for substrate. N96 carries an N-linked (GlcNAc...) asparagine glycan. Residues G118–F138 traverse the membrane as a helical segment. Residue H119 is the Proton donor of the active site. Residues R139–R147 lie on the Cytoplasmic side of the membrane. A helical transmembrane segment spans residues F148–L168. The Lumenal segment spans residues S169–R170. R170 provides a ligand contact to substrate. A helical transmembrane segment spans residues I171 to V191. H176 acts as the Nucleophile in catalysis. The Cytoplasmic segment spans residues A192 to Y209. A helical membrane pass occupies residues F210–L230. Residues G231–D254 are Lumenal-facing. A helical transmembrane segment spans residues T255–L275. The Cytoplasmic segment spans residues N276 to W291. A helical transmembrane segment spans residues F292 to L312. Residues K313–L320 are Lumenal-facing. A helical transmembrane segment spans residues I321–I341. At P342–L357 the chain is on the cytoplasmic side. The short motif at K354–L357 is the Prevents secretion from ER element.

The protein belongs to the glucose-6-phosphatase family.

It localises to the endoplasmic reticulum membrane. The enzyme catalyses D-glucose 6-phosphate + H2O = D-glucose + phosphate. The protein operates within carbohydrate biosynthesis; gluconeogenesis. In terms of biological role, hydrolyzes glucose-6-phosphate to glucose in the endoplasmic reticulum. Forms with the glucose-6-phosphate transporter (SLC37A4/G6PT) the complex responsible for glucose production in the terminal step of glycogenolysis and gluconeogenesis. Hence, it is the key enzyme in homeostatic regulation of blood glucose levels. The polypeptide is Glucose-6-phosphatase catalytic subunit 1 (G6PC1) (Felis catus (Cat)).